The primary structure comprises 369 residues: UDP-3-O-acylglucosamine N-acyltransferase (369 aa).

The active-site Proton acceptor is histidine 263.

Belongs to the transferase hexapeptide repeat family. LpxD subfamily. Homotrimer.

The enzyme catalyses a UDP-3-O-[(3R)-3-hydroxyacyl]-alpha-D-glucosamine + a (3R)-hydroxyacyl-[ACP] = a UDP-2-N,3-O-bis[(3R)-3-hydroxyacyl]-alpha-D-glucosamine + holo-[ACP] + H(+). It functions in the pathway bacterial outer membrane biogenesis; LPS lipid A biosynthesis. In terms of biological role, catalyzes the N-acylation of UDP-3-O-acylglucosamine using 3-hydroxyacyl-ACP as the acyl donor. Is involved in the biosynthesis of lipid A, a phosphorylated glycolipid that anchors the lipopolysaccharide to the outer membrane of the cell. In Burkholderia vietnamiensis (strain G4 / LMG 22486) (Burkholderia cepacia (strain R1808)), this protein is UDP-3-O-acylglucosamine N-acyltransferase.